Consider the following 476-residue polypeptide: Aspartyl/glutamyl-tRNA(Asn/Gln) amidotransferase subunit B (476 aa).

This sequence belongs to the GatB/GatE family. GatB subfamily. Heterotrimer of A, B and C subunits.

The catalysed reaction is L-glutamyl-tRNA(Gln) + L-glutamine + ATP + H2O = L-glutaminyl-tRNA(Gln) + L-glutamate + ADP + phosphate + H(+). It carries out the reaction L-aspartyl-tRNA(Asn) + L-glutamine + ATP + H2O = L-asparaginyl-tRNA(Asn) + L-glutamate + ADP + phosphate + 2 H(+). In terms of biological role, allows the formation of correctly charged Asn-tRNA(Asn) or Gln-tRNA(Gln) through the transamidation of misacylated Asp-tRNA(Asn) or Glu-tRNA(Gln) in organisms which lack either or both of asparaginyl-tRNA or glutaminyl-tRNA synthetases. The reaction takes place in the presence of glutamine and ATP through an activated phospho-Asp-tRNA(Asn) or phospho-Glu-tRNA(Gln). The sequence is that of Aspartyl/glutamyl-tRNA(Asn/Gln) amidotransferase subunit B from Bacillus pumilus (strain SAFR-032).